Consider the following 270-residue polypeptide: Phosphatidylglycerol--prolipoprotein diacylglyceryl transferase (270 aa).

Helical transmembrane passes span 10–30 (VALA…LIGI), 56–76 (LIFW…VLFY), 92–112 (WKGG…AWWF), 120–140 (FFQL…AGRI), 174–194 (PSQL…LYIF), 202–222 (MAVS…VEFV), and 236–256 (WVTM…GLLW). A 1,2-diacyl-sn-glycero-3-phospho-(1'-sn-glycerol) is bound at residue R139.

This sequence belongs to the Lgt family.

It is found in the cell inner membrane. The catalysed reaction is L-cysteinyl-[prolipoprotein] + a 1,2-diacyl-sn-glycero-3-phospho-(1'-sn-glycerol) = an S-1,2-diacyl-sn-glyceryl-L-cysteinyl-[prolipoprotein] + sn-glycerol 1-phosphate + H(+). Its pathway is protein modification; lipoprotein biosynthesis (diacylglyceryl transfer). In terms of biological role, catalyzes the transfer of the diacylglyceryl group from phosphatidylglycerol to the sulfhydryl group of the N-terminal cysteine of a prolipoprotein, the first step in the formation of mature lipoproteins. In Pseudomonas fluorescens (strain SBW25), this protein is Phosphatidylglycerol--prolipoprotein diacylglyceryl transferase.